The chain runs to 136 residues: Large ribosomal subunit protein uL3 (136 aa).

Q83 is modified (N5-methylglutamine).

Belongs to the universal ribosomal protein uL3 family. As to quaternary structure, part of the 50S ribosomal subunit. Forms a cluster with proteins L14 and L19. Post-translationally, methylated by PrmB.

Its function is as follows. One of the primary rRNA binding proteins, it binds directly near the 3'-end of the 23S rRNA, where it nucleates assembly of the 50S subunit. The sequence is that of Large ribosomal subunit protein uL3 (rplC) from Carsonella ruddii.